A 692-amino-acid chain; its full sequence is Elongation factor G (692 aa).

Residues 8–282 enclose the tr-type G domain; that stretch reads ENTRNIGIMA…AVIDYLPSPL (275 aa). Residues 17 to 24, 81 to 85, and 135 to 138 contribute to the GTP site; these read AHIDAGKT, DTPGH, and NKMD.

The protein belongs to the TRAFAC class translation factor GTPase superfamily. Classic translation factor GTPase family. EF-G/EF-2 subfamily.

The protein resides in the cytoplasm. Its function is as follows. Catalyzes the GTP-dependent ribosomal translocation step during translation elongation. During this step, the ribosome changes from the pre-translocational (PRE) to the post-translocational (POST) state as the newly formed A-site-bound peptidyl-tRNA and P-site-bound deacylated tRNA move to the P and E sites, respectively. Catalyzes the coordinated movement of the two tRNA molecules, the mRNA and conformational changes in the ribosome. The chain is Elongation factor G from Bacillus cereus (strain ATCC 10987 / NRS 248).